The sequence spans 631 residues: Pescadillo homolog (631 aa).

In terms of domain architecture, BRCT spans Arg-321–Leu-414. Residues Ser-428 to His-442 are compositionally biased toward basic and acidic residues. Disordered regions lie at residues Ser-428–Gln-471, Tyr-489–His-561, and Ala-602–Lys-631. Phosphoserine is present on residues Ser-453 and Ser-457. Composition is skewed to acidic residues over residues Ser-453–Gln-471 and Val-498–Asp-525. Basic and acidic residues predominate over residues Glu-526–Met-538. The segment covering Lys-544–Val-553 has biased composition (basic residues). A coiled-coil region spans residues Trp-591 to Lys-631. A compositionally biased stretch (basic and acidic residues) spans Ala-602–Ala-619. Over residues Ala-620–Lys-631 the composition is skewed to low complexity.

Belongs to the pescadillo family.

Its subcellular location is the nucleus. The protein localises to the nucleolus. The protein resides in the nucleoplasm. Functionally, required for maturation of ribosomal RNAs and formation of the large ribosomal subunit. In Drosophila pseudoobscura pseudoobscura (Fruit fly), this protein is Pescadillo homolog.